Consider the following 246-residue polypeptide: Chloroplastic group IIB intron splicing facilitator CRS2-A, chloroplastic (246 aa).

The transit peptide at 1–34 (MFCASSSPITSPLYPKAYKFSQTKSNSKRFSSLR) directs the protein to the chloroplast. TRNA is bound at residue Tyr64. Residue His69 is the Proton acceptor of the active site. Residues Tyr114, Asn116, and Asn162 each contribute to the tRNA site.

This sequence belongs to the PTH family. CRS2 subfamily. Part of large ribonucleo-protein complexes that include group IIB introns and either CAF1 or CAF2.

It localises to the plastid. Its subcellular location is the chloroplast stroma. Required for the splicing of group IIB introns in chloroplasts. The protein is Chloroplastic group IIB intron splicing facilitator CRS2-A, chloroplastic (CRS2A) of Arabidopsis thaliana (Mouse-ear cress).